Here is a 103-residue protein sequence, read N- to C-terminus: Large ribosomal subunit protein bL21 (103 aa).

The protein belongs to the bacterial ribosomal protein bL21 family. As to quaternary structure, part of the 50S ribosomal subunit. Contacts protein L20.

In terms of biological role, this protein binds to 23S rRNA in the presence of protein L20. The sequence is that of Large ribosomal subunit protein bL21 from Ruminiclostridium cellulolyticum (strain ATCC 35319 / DSM 5812 / JCM 6584 / H10) (Clostridium cellulolyticum).